Consider the following 131-residue polypeptide: Profilin-2 (131 aa).

This sequence belongs to the profilin family. Occurs in many kinds of cells as a complex with monomeric actin in a 1:1 ratio. In terms of tissue distribution, expressed in the intestinal wall, the spermatheca, and the pharynx.

Its subcellular location is the cytoplasm. The protein localises to the cytoskeleton. Functionally, binds to actin and affects the structure of the cytoskeleton. At high concentrations, profilin prevents the polymerization of actin, whereas it enhances it at low concentrations. By binding to PIP2, it inhibits the formation of IP3 and DG. This is Profilin-2 (pfn-2) from Caenorhabditis elegans.